The following is a 245-amino-acid chain: Protein-glutamine gamma-glutamyltransferase (245 aa).

This sequence belongs to the bacillus TGase family.

The catalysed reaction is L-glutaminyl-[protein] + L-lysyl-[protein] = [protein]-L-lysyl-N(6)-5-L-glutamyl-[protein] + NH4(+). In terms of biological role, probably plays a role in the assembly of the spore coat proteins by catalyzing epsilon-(gamma-glutamyl)lysine cross-links. In wild-type spores at 37 degrees Celsius, tgl mediates the cross-linking of GerQ in higher molecular mass forms, probably in cooperation with YabG. The chain is Protein-glutamine gamma-glutamyltransferase (tgl) from Bacillus subtilis (strain 168).